Reading from the N-terminus, the 58-residue chain is Large ribosomal subunit protein bL32 (58 aa).

A disordered region spans residues 1–23 (MAVPARHTSSAKKNRRRTHYKLT). The segment covering 9–20 (SSAKKNRRRTHY) has biased composition (basic residues).

It belongs to the bacterial ribosomal protein bL32 family.

The chain is Large ribosomal subunit protein bL32 (rpmF) from Lactococcus lactis subsp. cremoris (Streptococcus cremoris).